The sequence spans 344 residues: Mitochondrial genome maintenance exonuclease 1 (344 aa).

Active-site residues include Asp-238, Asp-251, and Lys-253. Ser-343 is subject to Phosphoserine.

Belongs to the MGME1 family.

It is found in the mitochondrion. In terms of biological role, metal-dependent single-stranded DNA (ssDNA) exonuclease involved in mitochondrial genome maintenance. Has preference for 5'-3' exonuclease activity but is also capable of endonuclease activity on linear substrates. Necessary for maintenance of proper 7S DNA levels. Probably involved in mitochondrial DNA (mtDNA) repair, possibly via the processing of displaced DNA containing Okazaki fragments during RNA-primed DNA synthesis on the lagging strand or via processing of DNA flaps during long-patch base excision repair. Specifically binds 5-hydroxymethylcytosine (5hmC)-containing DNA in stem cells. The protein is Mitochondrial genome maintenance exonuclease 1 of Homo sapiens (Human).